A 1465-amino-acid polypeptide reads, in one-letter code: DNA polymerase III polC-type (1465 aa).

An Exonuclease domain is found at 427–583 (YVVFDVETTG…YDAEATGRLL (157 aa)).

This sequence belongs to the DNA polymerase type-C family. PolC subfamily.

It is found in the cytoplasm. It catalyses the reaction DNA(n) + a 2'-deoxyribonucleoside 5'-triphosphate = DNA(n+1) + diphosphate. Functionally, required for replicative DNA synthesis. This DNA polymerase also exhibits 3' to 5' exonuclease activity. In Streptococcus pyogenes serotype M3 (strain ATCC BAA-595 / MGAS315), this protein is DNA polymerase III polC-type.